The following is a 393-amino-acid chain: 2-methylcitrate synthase (393 aa).

Substrate is bound by residues R92 and H207. H242 is an active-site residue. 275–279 (KIMGF) lines the CoA pocket. The active site involves H281. R290 is a binding site for substrate. The active site involves D332. 2 residues coordinate substrate: R357 and R376.

It belongs to the citrate synthase family. As to quaternary structure, homodimer.

It carries out the reaction propanoyl-CoA + oxaloacetate + H2O = (2S,3S)-2-methylcitrate + CoA + H(+). It catalyses the reaction oxaloacetate + acetyl-CoA + H2O = citrate + CoA + H(+). It participates in organic acid metabolism; propanoate degradation. The protein operates within carbohydrate metabolism; tricarboxylic acid cycle; isocitrate from oxaloacetate: step 1/2. Functionally, involved in the catabolism of short chain fatty acids (SCFA) via the tricarboxylic acid (TCA)(acetyl degradation route) and via the 2-methylcitrate cycle I (propionate degradation route). Catalyzes the Claisen condensation of propionyl-CoA and oxaloacetate (OAA) to yield 2-methylcitrate (2-MC) and CoA. Also catalyzes the condensation of oxaloacetate with acetyl-CoA. This is 2-methylcitrate synthase (gltA1) from Mycobacterium tuberculosis (strain ATCC 35801 / TMC 107 / Erdman).